We begin with the raw amino-acid sequence, 308 residues long: Elongation factor Ts (308 aa).

The tract at residues 80 to 83 (TDFV) is involved in Mg(2+) ion dislocation from EF-Tu.

The protein belongs to the EF-Ts family.

The protein resides in the cytoplasm. Its function is as follows. Associates with the EF-Tu.GDP complex and induces the exchange of GDP to GTP. It remains bound to the aminoacyl-tRNA.EF-Tu.GTP complex up to the GTP hydrolysis stage on the ribosome. The protein is Elongation factor Ts of Sphingopyxis alaskensis (strain DSM 13593 / LMG 18877 / RB2256) (Sphingomonas alaskensis).